Here is a 332-residue protein sequence, read N- to C-terminus: Glycerol-3-phosphate dehydrogenase [NAD(P)+] (332 aa).

Residues Trp11, Arg30, and Lys108 each contribute to the NADPH site. Residues Lys108, Gly137, and Ser139 each coordinate sn-glycerol 3-phosphate. Residue Ala141 coordinates NADPH. Sn-glycerol 3-phosphate-binding residues include Lys192, Asp245, Ser255, Arg256, and Asn257. The active-site Proton acceptor is Lys192. Arg256 serves as a coordination point for NADPH. Val280 and Glu282 together coordinate NADPH.

The protein belongs to the NAD-dependent glycerol-3-phosphate dehydrogenase family.

Its subcellular location is the cytoplasm. It carries out the reaction sn-glycerol 3-phosphate + NAD(+) = dihydroxyacetone phosphate + NADH + H(+). The enzyme catalyses sn-glycerol 3-phosphate + NADP(+) = dihydroxyacetone phosphate + NADPH + H(+). It functions in the pathway membrane lipid metabolism; glycerophospholipid metabolism. Its function is as follows. Catalyzes the reduction of the glycolytic intermediate dihydroxyacetone phosphate (DHAP) to sn-glycerol 3-phosphate (G3P), the key precursor for phospholipid synthesis. This Burkholderia multivorans (strain ATCC 17616 / 249) protein is Glycerol-3-phosphate dehydrogenase [NAD(P)+].